The following is a 302-amino-acid chain: Formylmethanofuran--tetrahydromethanopterin formyltransferase (302 aa).

This sequence belongs to the FTR family. Homotetramer.

Its subcellular location is the cytoplasm. The catalysed reaction is N-formylmethanofuran + 5,6,7,8-tetrahydromethanopterin + H(+) = N(5)-formyl-5,6,7,8-tetrahydromethanopterin + methanofuran. It participates in one-carbon metabolism; formaldehyde degradation; formate from formaldehyde (H(4)MPT route): step 4/5. In terms of biological role, catalyzes the transfer of a formyl group from 5-formyl tetrahydromethanopterin (5-formyl-H(4)MPT) to methanofuran (MFR) to produce formylmethanofuran (formyl-MFR) and tetrahydromethanopterin (H(4)MPT). This is Formylmethanofuran--tetrahydromethanopterin formyltransferase from Methylobacillus flagellatus (strain ATCC 51484 / DSM 6875 / VKM B-1610 / KT).